We begin with the raw amino-acid sequence, 242 residues long: Large ribosomal subunit protein uL3 (242 aa).

The interval 131-165 is disordered; the sequence is GRATHGNSVSHRTHGSTGQRQDPGKVFKGKKMAGH. Residues 135–150 are compositionally biased toward polar residues; that stretch reads HGNSVSHRTHGSTGQR. Glutamine 151 bears the N5-methylglutamine mark.

This sequence belongs to the universal ribosomal protein uL3 family. In terms of assembly, part of the 50S ribosomal subunit. Forms a cluster with proteins L14 and L19. In terms of processing, methylated by PrmB.

In terms of biological role, one of the primary rRNA binding proteins, it binds directly near the 3'-end of the 23S rRNA, where it nucleates assembly of the 50S subunit. The sequence is that of Large ribosomal subunit protein uL3 from Chelativorans sp. (strain BNC1).